Here is a 297-residue protein sequence, read N- to C-terminus: tRNA pseudouridine synthase B (297 aa).

Catalysis depends on D44, which acts as the Nucleophile.

The protein belongs to the pseudouridine synthase TruB family. Type 1 subfamily.

It carries out the reaction uridine(55) in tRNA = pseudouridine(55) in tRNA. Its function is as follows. Responsible for synthesis of pseudouridine from uracil-55 in the psi GC loop of transfer RNAs. The sequence is that of tRNA pseudouridine synthase B from Corynebacterium glutamicum (strain ATCC 13032 / DSM 20300 / JCM 1318 / BCRC 11384 / CCUG 27702 / LMG 3730 / NBRC 12168 / NCIMB 10025 / NRRL B-2784 / 534).